A 469-amino-acid chain; its full sequence is Uronate isomerase (469 aa).

This sequence belongs to the metallo-dependent hydrolases superfamily. Uronate isomerase family.

It carries out the reaction D-glucuronate = D-fructuronate. The enzyme catalyses aldehydo-D-galacturonate = keto-D-tagaturonate. It functions in the pathway carbohydrate metabolism; pentose and glucuronate interconversion. This Yersinia enterocolitica serotype O:8 / biotype 1B (strain NCTC 13174 / 8081) protein is Uronate isomerase.